An 885-amino-acid chain; its full sequence is MQRVYAFEDGDGTNKKLLGGKGAGLCTMTKIGLPVPQGFVITTEMCKQFIANGNKMPEGLMEEVKKNMQLVEKKSGKVFGGEENPLLVSVRSGAAMSMPGMMDTILNLGLNDKTVVALAKLTNNERFAYDSYRRFVSLFGKIALNVDDEVYDKTLENKKVEKGVKLDTELDANDMKELAQVFIKKTEEFTKQPFPVDPYAQLEFAICAVFRSWMGKRAVDYRREFKITPEQADGTAVSVVSMVYGNMGNDSATGVCFTRDPGTGENMFFGEYLKNAQGEDVVAGIRTPQIISKMAEDADLPGCYEQLLDIRKKLEGYFHEVQDFEFTIERKKLYMLQTRNGKMNATATVRTGVDMVEEGLITKEQAIMRIAPQSVDQLLHKNMPANYAEAPLVKGLPASPGAATGAVVFDADDAVEQAKGKKVLLLREETKPEDIHGFFVAEGILTCRGGKTSHAAVVARGMGKPCVSGAEGIKVDVAKKIAKIGSLEVHEGDILTIDGSTGCVYKGEVPLEEPQVGSGYFGTILKWANEIKKIGVFANADLPSAAKKALEFGAEGIGLCRTERMFNAVERLPIVVKMILSNTLEERKKYLNELMPLQKQDFIGLLKTMNGLPVTVRLLDPPLHEFLPTLEELMREIFEMKLSGKTEGLAEKEVVLKKVKELMEVNPMIGHRGIRLGTTNPEIYEMQIRAFLEATAEVIKEGIKTHAEIMIPNVTEVNELINLRKNVLEPVHEEVEKKYGIKVPFMYGTMVECVRAALTADKIATEASFFSFGTNDLTQGTFSYSREDSENKFIPKYVELKILPANPFEILDRPGVGEVMRIAVTKGRQTRPELLVGICGEHGGEPSSIEWCHMIGLNYVSCSSYRIPVARIAAAQAQIRHPREN.

The interval 1-342 (MQRVYAFEDG…LYMLQTRNGK (342 aa)) is N-terminal. Arg-91 provides a ligand contact to ATP. Residues 343–399 (MNATATVRTGVDMVEEGLITKEQAIMRIAPQSVDQLLHKNMPANYAEAPLVKGLPAS) are linker 1. Residues 400-497 (PGAATGAVVF…EVHEGDILTI (98 aa)) are central. The active-site Tele-phosphohistidine intermediate is the His-454. The interval 498–533 (DGSTGCVYKGEVPLEEPQVGSGYFGTILKWANEIKK) is linker 2. The C-terminal stretch occupies residues 534 to 885 (IGVFANADLP…QAQIRHPREN (352 aa)). Substrate is bound by residues Arg-561, Arg-617, Glu-752, Gly-773, Thr-774, Asn-775, and Asp-776. Glu-752 contributes to the Mg(2+) binding site. Asp-776 provides a ligand contact to Mg(2+). Cys-839 functions as the Proton donor in the catalytic mechanism.

Belongs to the PEP-utilizing enzyme family. As to quaternary structure, homodimer. Requires Mg(2+) as cofactor.

The catalysed reaction is pyruvate + phosphate + ATP = phosphoenolpyruvate + AMP + diphosphate + H(+). Its function is as follows. Catalyzes the dephosphorylation of phosphoenolpyruvate and diphosphate to produce ATP. The protein is Pyruvate, phosphate dikinase of Entamoeba histolytica (strain ATCC 30459 / HM-1:IMSS / ABRM).